A 270-amino-acid polypeptide reads, in one-letter code: Putative phosphoenolpyruvate synthase regulatory protein (270 aa).

Residue 150 to 157 (GVSRSGKT) coordinates ADP.

It belongs to the pyruvate, phosphate/water dikinase regulatory protein family. PSRP subfamily.

The catalysed reaction is [pyruvate, water dikinase] + ADP = [pyruvate, water dikinase]-phosphate + AMP + H(+). It carries out the reaction [pyruvate, water dikinase]-phosphate + phosphate + H(+) = [pyruvate, water dikinase] + diphosphate. Its function is as follows. Bifunctional serine/threonine kinase and phosphorylase involved in the regulation of the phosphoenolpyruvate synthase (PEPS) by catalyzing its phosphorylation/dephosphorylation. This is Putative phosphoenolpyruvate synthase regulatory protein from Cupriavidus metallidurans (strain ATCC 43123 / DSM 2839 / NBRC 102507 / CH34) (Ralstonia metallidurans).